Reading from the N-terminus, the 69-residue chain is MKARELKELRTSNPQDLIKKLGDLKAELFNLRFQLATGQLENPMRIREVKKSIAQIKTIIREEELKIEQ.

Belongs to the universal ribosomal protein uL29 family.

The polypeptide is Large ribosomal subunit protein uL29 (Clostridium perfringens (strain ATCC 13124 / DSM 756 / JCM 1290 / NCIMB 6125 / NCTC 8237 / Type A)).